The sequence spans 203 residues: Guanylate kinase (203 aa).

A Guanylate kinase-like domain is found at 3–181 (GTLYIVAAPS…AVAEMCAIFT (179 aa)). 10-17 (APSGAGKS) is an ATP binding site.

This sequence belongs to the guanylate kinase family.

The protein resides in the cytoplasm. The catalysed reaction is GMP + ATP = GDP + ADP. Its function is as follows. Essential for recycling GMP and indirectly, cGMP. The protein is Guanylate kinase of Xanthomonas euvesicatoria pv. vesicatoria (strain 85-10) (Xanthomonas campestris pv. vesicatoria).